The primary structure comprises 189 residues: Probable DNA-directed RNA polymerase subunit delta (189 aa).

One can recognise an HTH HARE-type domain in the interval 14–81 (LSMIEVAHAI…GENVWALRTW (68 aa)). 2 stretches are compositionally biased toward acidic residues: residues 90-100 (EVDHPEDDGDE) and 118-189 (EGDD…EDEE). Residues 90 to 189 (EVDHPEDDGD…DDLDDDEDEE (100 aa)) are disordered.

Belongs to the RpoE family. In terms of assembly, RNAP is composed of a core of 2 alpha, a beta and a beta' subunits. The core is associated with a delta subunit and one of several sigma factors.

In terms of biological role, participates in both the initiation and recycling phases of transcription. In the presence of the delta subunit, RNAP displays an increased specificity of transcription, a decreased affinity for nucleic acids, and an increased efficiency of RNA synthesis because of enhanced recycling. In Lactobacillus delbrueckii subsp. bulgaricus (strain ATCC BAA-365 / Lb-18), this protein is Probable DNA-directed RNA polymerase subunit delta.